Consider the following 356-residue polypeptide: UDP-N-acetylglucosamine--N-acetylmuramyl-(pentapeptide) pyrophosphoryl-undecaprenol N-acetylglucosamine transferase (356 aa).

UDP-N-acetyl-alpha-D-glucosamine is bound by residues 12-14, Asn124, Arg163, Ser188, Ile242, and Gln287; that span reads TGG.

Belongs to the glycosyltransferase 28 family. MurG subfamily.

It localises to the cell inner membrane. The enzyme catalyses di-trans,octa-cis-undecaprenyl diphospho-N-acetyl-alpha-D-muramoyl-L-alanyl-D-glutamyl-meso-2,6-diaminopimeloyl-D-alanyl-D-alanine + UDP-N-acetyl-alpha-D-glucosamine = di-trans,octa-cis-undecaprenyl diphospho-[N-acetyl-alpha-D-glucosaminyl-(1-&gt;4)]-N-acetyl-alpha-D-muramoyl-L-alanyl-D-glutamyl-meso-2,6-diaminopimeloyl-D-alanyl-D-alanine + UDP + H(+). It participates in cell wall biogenesis; peptidoglycan biosynthesis. Functionally, cell wall formation. Catalyzes the transfer of a GlcNAc subunit on undecaprenyl-pyrophosphoryl-MurNAc-pentapeptide (lipid intermediate I) to form undecaprenyl-pyrophosphoryl-MurNAc-(pentapeptide)GlcNAc (lipid intermediate II). The protein is UDP-N-acetylglucosamine--N-acetylmuramyl-(pentapeptide) pyrophosphoryl-undecaprenol N-acetylglucosamine transferase of Pseudomonas savastanoi pv. phaseolicola (strain 1448A / Race 6) (Pseudomonas syringae pv. phaseolicola (strain 1448A / Race 6)).